Reading from the N-terminus, the 117-residue chain is Large ribosomal subunit protein bL20 (117 aa).

The protein belongs to the bacterial ribosomal protein bL20 family.

Its function is as follows. Binds directly to 23S ribosomal RNA and is necessary for the in vitro assembly process of the 50S ribosomal subunit. It is not involved in the protein synthesizing functions of that subunit. In Finegoldia magna (strain ATCC 29328 / DSM 20472 / WAL 2508) (Peptostreptococcus magnus), this protein is Large ribosomal subunit protein bL20.